Here is a 705-residue protein sequence, read N- to C-terminus: Elongation factor G (705 aa).

The tr-type G domain maps to E8 to A290. GTP is bound by residues A17–T24, D88–H92, and N142–D145. A disordered region spans residues A290 to A309.

It belongs to the TRAFAC class translation factor GTPase superfamily. Classic translation factor GTPase family. EF-G/EF-2 subfamily.

The protein localises to the cytoplasm. In terms of biological role, catalyzes the GTP-dependent ribosomal translocation step during translation elongation. During this step, the ribosome changes from the pre-translocational (PRE) to the post-translocational (POST) state as the newly formed A-site-bound peptidyl-tRNA and P-site-bound deacylated tRNA move to the P and E sites, respectively. Catalyzes the coordinated movement of the two tRNA molecules, the mRNA and conformational changes in the ribosome. This chain is Elongation factor G, found in Xanthomonas campestris pv. campestris (strain 8004).